Consider the following 306-residue polypeptide: Aspartate carbamoyltransferase catalytic subunit (306 aa).

Residues R51 and T52 each coordinate carbamoyl phosphate. K79 is an L-aspartate binding site. 3 residues coordinate carbamoyl phosphate: R101, H130, and Q133. L-aspartate-binding residues include R163 and R215. Residues G256 and P257 each coordinate carbamoyl phosphate.

It belongs to the aspartate/ornithine carbamoyltransferase superfamily. ATCase family. As to quaternary structure, heterododecamer (2C3:3R2) of six catalytic PyrB chains organized as two trimers (C3), and six regulatory PyrI chains organized as three dimers (R2).

The enzyme catalyses carbamoyl phosphate + L-aspartate = N-carbamoyl-L-aspartate + phosphate + H(+). Its pathway is pyrimidine metabolism; UMP biosynthesis via de novo pathway; (S)-dihydroorotate from bicarbonate: step 2/3. Catalyzes the condensation of carbamoyl phosphate and aspartate to form carbamoyl aspartate and inorganic phosphate, the committed step in the de novo pyrimidine nucleotide biosynthesis pathway. The sequence is that of Aspartate carbamoyltransferase catalytic subunit from Ehrlichia ruminantium (strain Welgevonden).